Here is a 116-residue protein sequence, read N- to C-terminus: G antigen 10 (116 aa).

Positions 1–116 (MSWRGRSTYR…PEEGEKQSQC (116 aa)) are disordered. A compositionally biased stretch (acidic residues) spans 31–44 (FSDEVEPATPEEGE). 2 stretches are compositionally biased toward basic and acidic residues: residues 71–80 (PEADSQEQVH) and 102–116 (EEVKRPEEGEKQSQC).

This sequence belongs to the GAGE family.

This is G antigen 10 (GAGE10) from Homo sapiens (Human).